The following is a 424-amino-acid chain: Splicing factor 3B subunit 4 (424 aa).

Position 2 is an N-acetylalanine (alanine 2). 2 RRM domains span residues 13-91 (ATVY…KASA) and 100-179 (ANIF…YAFK). Tyrosine 56 carries the post-translational modification Phosphotyrosine. The segment at 207 to 424 (PHQLFADAPP…RGPLRGPLPQ (218 aa)) is disordered. Over residues 222-231 (NPVVSSLGSG) the composition is skewed to low complexity. Over residues 232–268 (LPPPGMPPPGSFPPPVPPPGALPPGIPPAMPPPPMPP) the composition is skewed to pro residues. Low complexity-rich tracts occupy residues 269–280 (GAAGHGPPSAGT) and 303–323 (HPGMSQMQLAHHGPHGLGHPH). Pro residues-rich tracts occupy residues 332–381 (QPPP…PLMP) and 388–424 (PPRPPPYGYQRGPLPPPRPTPRPPVPPRGPLRGPLPQ).

Belongs to the SF3B4 family. In terms of assembly, component of the 17S U2 SnRNP complex, a ribonucleoprotein complex that contains small nuclear RNA (snRNA) U2 and a number of specific proteins. Part of the SF3B subcomplex of the 17S U2 SnRNP complex. SF3B associates with the splicing subcomplex SF3A and a 12S RNA unit to form the U2 small nuclear ribonucleoproteins complex (U2 snRNP). SF3B4 has been found in complex spliceosome 'B' and 'C' as well. Component of the minor (U12-type spliceosome) spliceosome. Found in a complex with PRMT9, SF3B2 and SF3B4.

The protein resides in the nucleus. In terms of biological role, component of the 17S U2 SnRNP complex of the spliceosome, a large ribonucleoprotein complex that removes introns from transcribed pre-mRNAs. The 17S U2 SnRNP complex (1) directly participates in early spliceosome assembly and (2) mediates recognition of the intron branch site during pre-mRNA splicing by promoting the selection of the pre-mRNA branch-site adenosine, the nucleophile for the first step of splicing. Within the 17S U2 SnRNP complex, SF3B4 is part of the SF3B subcomplex, which is required for 'A' complex assembly formed by the stable binding of U2 snRNP to the branchpoint sequence in pre-mRNA. Sequence independent binding of SF3A and SF3B subcomplexes upstream of the branch site is essential, it may anchor U2 snRNP to the pre-mRNA. May also be involved in the assembly of the 'E' complex. Also acts as a component of the minor spliceosome, which is involved in the splicing of U12-type introns in pre-mRNAs. The protein is Splicing factor 3B subunit 4 (SF3B4) of Homo sapiens (Human).